The chain runs to 332 residues: Adenosine deaminase (332 aa).

Residues H12 and H14 each contribute to the Zn(2+) site. Residues H14, D16, and G170 each contribute to the substrate site. H197 contributes to the Zn(2+) binding site. The active-site Proton donor is the E200. Residue D278 participates in Zn(2+) binding.

The protein belongs to the metallo-dependent hydrolases superfamily. Adenosine and AMP deaminases family. Adenosine deaminase subfamily. It depends on Zn(2+) as a cofactor.

The enzyme catalyses adenosine + H2O + H(+) = inosine + NH4(+). It catalyses the reaction 2'-deoxyadenosine + H2O + H(+) = 2'-deoxyinosine + NH4(+). Catalyzes the hydrolytic deamination of adenosine and 2-deoxyadenosine. In Clostridium perfringens (strain 13 / Type A), this protein is Adenosine deaminase.